A 407-amino-acid polypeptide reads, in one-letter code: tRNA(Ile2) 2-agmatinylcytidine synthetase TiaS (407 aa).

The protein belongs to the TiaS family.

It is found in the cytoplasm. It catalyses the reaction cytidine(34) in tRNA(Ile2) + agmatine + ATP + H2O = 2-agmatinylcytidine(34) in tRNA(Ile2) + AMP + 2 phosphate + 2 H(+). In terms of biological role, ATP-dependent agmatine transferase that catalyzes the formation of 2-agmatinylcytidine (agm2C) at the wobble position (C34) of tRNA(Ile2), converting the codon specificity from AUG to AUA. The chain is tRNA(Ile2) 2-agmatinylcytidine synthetase TiaS from Caldivirga maquilingensis (strain ATCC 700844 / DSM 13496 / JCM 10307 / IC-167).